The chain runs to 704 residues: Glycine--tRNA ligase beta subunit (704 aa).

It belongs to the class-II aminoacyl-tRNA synthetase family. In terms of assembly, tetramer of two alpha and two beta subunits.

It localises to the cytoplasm. It catalyses the reaction tRNA(Gly) + glycine + ATP = glycyl-tRNA(Gly) + AMP + diphosphate. This Rhizobium etli (strain CIAT 652) protein is Glycine--tRNA ligase beta subunit.